The following is a 150-amino-acid chain: Anthrone oxygenase gedH (150 aa).

The next 4 membrane-spanning stretches (helical) occupy residues 1–21, 41–61, 73–93, and 128–148; these read MANP…PVFL, GHKL…WVAA, PVLA…CMVS, and LFPL…LVGG.

Belongs to the anthrone oxygenase family.

It is found in the membrane. The catalysed reaction is emodin anthrone + O2 = emodin + H2O + H(+). It participates in secondary metabolite biosynthesis. Functionally, anthrone oxygenase; part of the gene cluster that mediates the biosynthesis of geodin, an intermediate in the biosynthesis of other natural products. The pathway begins with the synthesis of atrochrysone thioester by the polyketide synthase (PKS) gedC. The atrochrysone carboxyl ACP thioesterase gedB then breaks the thioester bond and releases the atrochrysone carboxylic acid from gedC. The atrochrysone carboxylic acid is then converted to atrochrysone which is further transformed into emodin anthrone. The next step is performed by the emodin anthrone oxygenase gedH that catalyzes the oxidation of emodinanthrone to emodin. Emodin O-methyltransferase encoded probably by gedA then catalyzes methylation of the 8-hydroxy group of emodin to form questin. Ring cleavage of questin by questin oxidase gedK leads to desmethylsulochrin via several intermediates including questin epoxide. Another methylation step probably catalyzed by methyltransferase gedG leads to the formation of sulochrin which is further converted to dihydrogeodin by the sulochrin halogenase gedL. Finally, the dihydrogeodin oxidase gedJ catalyzes the stereospecific phenol oxidative coupling reaction converting dihydrogeodin to geodin. The sequence is that of Anthrone oxygenase gedH from Aspergillus terreus (strain NIH 2624 / FGSC A1156).